The primary structure comprises 144 residues: Large ribosomal subunit protein uL15 (144 aa).

Residues 1–60 are disordered; sequence MKMNTLKPAEGSKQSPKRLGRGIGSGLGKTGGRGHKGQTSRSGGTIRPGFEGGQQPLQRR. A compositionally biased stretch (gly residues) spans 21–31; sequence RGIGSGLGKTG.

This sequence belongs to the universal ribosomal protein uL15 family. As to quaternary structure, part of the 50S ribosomal subunit.

Binds to the 23S rRNA. This is Large ribosomal subunit protein uL15 from Hahella chejuensis (strain KCTC 2396).